We begin with the raw amino-acid sequence, 260 residues long: UPF0246 protein APL_0602 (260 aa).

It belongs to the UPF0246 family.

The protein is UPF0246 protein APL_0602 of Actinobacillus pleuropneumoniae serotype 5b (strain L20).